Consider the following 235-residue polypeptide: GVVDDNSNRERLIVGLDVPNIKQAEKLVTQLGDEVSFYKIGYQLAFSGGMDFVQDLIQARKKVFFDMKLLDIDHTVARAVENIAKLGVSMLTLHAYPTVMKAAVAAAKGSDLCLLGVTVLTSMDEADLHNAGYKDSPKKLAFKRAEQAREAGMGGIVSSALEAAALRKVIGSDMALVTPGIRPMGSDKGDQKRVMAPRQALDSGASHLVVARPIIQADDPLVATKKILAEMADGC.

Residues Asp-17, Lys-39, 66–75 (DMKLLDIDHT), Thr-121, Arg-182, Gln-191, and Arg-212 contribute to the substrate site. Lys-68 serves as the catalytic Proton donor.

It belongs to the OMP decarboxylase family. Type 1 subfamily. As to quaternary structure, homodimer.

It catalyses the reaction orotidine 5'-phosphate + H(+) = UMP + CO2. It functions in the pathway pyrimidine metabolism; UMP biosynthesis via de novo pathway; UMP from orotate: step 2/2. Catalyzes the decarboxylation of orotidine 5'-monophosphate (OMP) to uridine 5'-monophosphate (UMP). The protein is Orotidine 5'-phosphate decarboxylase of Bartonella bacilliformis.